The chain runs to 221 residues: GTP-binding nuclear protein Ran-A1 (221 aa).

The Small GTPase Ran-type domain maps to 10 to 174; sequence DYPSFKLVIV…LYLARKLAGD (165 aa). 21–28 lines the GTP pocket; the sequence is DGGTGKTT. The switch-I stretch occupies residues 40–48; the sequence is KKYEPTIGV. GTP is bound by residues Gly-71, 125–128, and 153–155; these read NKVD and SAK. The segment at 71 to 87 is switch-II; it reads GQEKFGGLRDGYYIHGQ. Residues 199-208 show a composition bias toward low complexity; that stretch reads QHEAELAAAA. A disordered region spans residues 199–221; it reads QHEAELAAAASQPLPDDDDETFD.

This sequence belongs to the small GTPase superfamily. Ran family. In terms of assembly, found in a nuclear export complex with RanGTP, exportin and pre-miRNA.

The protein localises to the nucleus. Functionally, GTP-binding protein involved in nucleocytoplasmic transport. Required for the import of protein into the nucleus and also for RNA export. Involved in chromatin condensation and control of cell cycle. This Nicotiana tabacum (Common tobacco) protein is GTP-binding nuclear protein Ran-A1 (RAN-A1).